Reading from the N-terminus, the 277-residue chain is MSNDEIVAGIMRDYILNLLKEKKRIDDRGFEDYRPIEVEVGVIEKAEGSALVKLGNTQVLVGIKATLGEPFPDTPNMGVMTTNVELVPLASPTFEPGPPDERAIELARVIDRGIRESRALNLEKMVIAPGKIVRVVFIDVHVLDHDGNLMDAIGIGAIAALLNARVPKVLYNEETGEVEILEEKEPLPVEKIPISVTFAKIGNYLVVDPTLEEEQIMDGRLTITTDETGHISAVQKSEGGAFKLEEVMYAVETAFKKAEEIRKIILNALEKANNSEE.

This sequence belongs to the RNase PH family. Rrp42 subfamily. As to quaternary structure, component of the archaeal exosome complex. Forms a hexameric ring-like arrangement composed of 3 Rrp41-Rrp42 heterodimers. The hexameric ring associates with a trimer of Rrp4 and/or Csl4 subunits.

Its subcellular location is the cytoplasm. Its function is as follows. Non-catalytic component of the exosome, which is a complex involved in RNA degradation. Contributes to the structuring of the Rrp41 active site. The sequence is that of Exosome complex component Rrp42 from Pyrococcus furiosus (strain ATCC 43587 / DSM 3638 / JCM 8422 / Vc1).